The following is a 279-amino-acid chain: Oxygen-dependent coproporphyrinogen-III oxidase (279 aa).

Serine 102 contacts substrate. A divalent metal cation contacts are provided by histidine 106 and histidine 116. The Proton donor role is filled by histidine 116. 118-120 (NTR) serves as a coordination point for substrate. 2 residues coordinate a divalent metal cation: histidine 149 and histidine 179. Positions 244-279 (YVEFNLLYDRGTKFGLMTDGNVEAILMSLPPEVKWA) are important for dimerization.

Belongs to the aerobic coproporphyrinogen-III oxidase family. As to quaternary structure, homodimer. A divalent metal cation is required as a cofactor.

The protein resides in the cytoplasm. It carries out the reaction coproporphyrinogen III + O2 + 2 H(+) = protoporphyrinogen IX + 2 CO2 + 2 H2O. Its pathway is porphyrin-containing compound metabolism; protoporphyrin-IX biosynthesis; protoporphyrinogen-IX from coproporphyrinogen-III (O2 route): step 1/1. Its function is as follows. Involved in the heme biosynthesis. Catalyzes the aerobic oxidative decarboxylation of propionate groups of rings A and B of coproporphyrinogen-III to yield the vinyl groups in protoporphyrinogen-IX. The polypeptide is Oxygen-dependent coproporphyrinogen-III oxidase (Rickettsia bellii (strain OSU 85-389)).